Reading from the N-terminus, the 24-residue chain is Humanin-like 7 (24 aa).

Belongs to the humanin family. In terms of tissue distribution, expressed in testis.

It is found in the secreted. It localises to the cytoplasm. Its function is as follows. Plays a role as a neuroprotective and antiapoptotic factor. In Homo sapiens (Human), this protein is Humanin-like 7.